The sequence spans 404 residues: Cysteine desulfurase IscS (404 aa).

Residues 75-76 (AT), Asn-155, Gln-183, and 203-205 (SAH) contribute to the pyridoxal 5'-phosphate site. Lys-206 is modified (N6-(pyridoxal phosphate)lysine). Pyridoxal 5'-phosphate is bound at residue Thr-243. The active-site Cysteine persulfide intermediate is Cys-328. Cys-328 serves as a coordination point for [2Fe-2S] cluster.

It belongs to the class-V pyridoxal-phosphate-dependent aminotransferase family. NifS/IscS subfamily. Homodimer. Forms a heterotetramer with IscU, interacts with other sulfur acceptors. It depends on pyridoxal 5'-phosphate as a cofactor.

The protein localises to the cytoplasm. It catalyses the reaction (sulfur carrier)-H + L-cysteine = (sulfur carrier)-SH + L-alanine. Its pathway is cofactor biosynthesis; iron-sulfur cluster biosynthesis. Its function is as follows. Master enzyme that delivers sulfur to a number of partners involved in Fe-S cluster assembly, tRNA modification or cofactor biosynthesis. Catalyzes the removal of elemental sulfur atoms from cysteine to produce alanine. Functions as a sulfur delivery protein for Fe-S cluster synthesis onto IscU, an Fe-S scaffold assembly protein, as well as other S acceptor proteins. The sequence is that of Cysteine desulfurase IscS from Shewanella sediminis (strain HAW-EB3).